A 119-amino-acid chain; its full sequence is Beta-2-microglobulin (119 aa).

A signal peptide spans M1–A20. The 90-residue stretch at P25–K114 folds into the Ig-like C1-type domain. Residues C45 and C100 are joined by a disulfide bond.

It belongs to the beta-2-microglobulin family. Heterodimer of an alpha chain and a beta chain. Beta-2-microglobulin is the beta-chain of major histocompatibility complex class I molecules.

Its subcellular location is the secreted. Component of the class I major histocompatibility complex (MHC). Involved in the presentation of peptide antigens to the immune system. The protein is Beta-2-microglobulin (B2M) of Saguinus oedipus (Cotton-top tamarin).